Reading from the N-terminus, the 34-residue chain is Photosystem II reaction center protein M (34 aa).

Residues 7 to 27 traverse the membrane as a helical segment; it reads GFVASLLFVLVPTVFLIILFI.

It belongs to the PsbM family. In terms of assembly, PSII is composed of 1 copy each of membrane proteins PsbA, PsbB, PsbC, PsbD, PsbE, PsbF, PsbH, PsbI, PsbJ, PsbK, PsbL, PsbM, PsbT, PsbX, PsbY, PsbZ, Psb30/Ycf12, peripheral proteins PsbO, CyanoQ (PsbQ), PsbU, PsbV and a large number of cofactors. It forms dimeric complexes.

The protein localises to the cellular thylakoid membrane. Its function is as follows. One of the components of the core complex of photosystem II (PSII). PSII is a light-driven water:plastoquinone oxidoreductase that uses light energy to abstract electrons from H(2)O, generating O(2) and a proton gradient subsequently used for ATP formation. It consists of a core antenna complex that captures photons, and an electron transfer chain that converts photonic excitation into a charge separation. This subunit is found at the monomer-monomer interface. This Synechococcus sp. (strain WH7803) protein is Photosystem II reaction center protein M.